The sequence spans 416 residues: 3-hydroxy-3-methylglutaryl coenzyme A reductase AN1593 (416 aa).

Catalysis depends on Glu103, which acts as the Charge relay system. N-linked (GlcNAc...) asparagine glycosylation occurs at Asn167. The active-site Charge relay system is Lys236. Asn277 carries N-linked (GlcNAc...) asparagine glycosylation. Catalysis depends on Asp312, which acts as the Charge relay system. A helical membrane pass occupies residues 380 to 400; the sequence is LALLVAAGVLAGELSLCSALS. His408 functions as the Proton donor in the catalytic mechanism.

The protein belongs to the HMG-CoA reductase family.

The protein localises to the membrane. The catalysed reaction is (R)-mevalonate + 2 NADP(+) + CoA = (3S)-3-hydroxy-3-methylglutaryl-CoA + 2 NADPH + 2 H(+). The protein operates within metabolic intermediate biosynthesis; (R)-mevalonate biosynthesis; (R)-mevalonate from acetyl-CoA: step 3/3. Its function is as follows. 3-hydroxy-3-methylglutaryl coenzyme A reductase; part of the gene cluster that mediates the biosynthesis of the diterpene ent-pimara-8(14),15-diene (PD). Within the cluster, the HMG-CoA reductase AN1593 functions in the mevalonate pathway, which produces isoprenoid precursors. The geranylgeranyl pyrophosphate (GGPP) synthase AN1592 is needed in the formation of GGPP, the precursor for diterpenes. Lastly, the pimaradiene synthase pbcA performs the 2 cyclization steps that convert GGPP to ent-pimara-8(14),15-diene. The putative roles of the remaining cluster enzymes in ent-pimara-8(14),15-diene biosynthesis is unclear. The cytochrome P450 monooxygenase AN1598, the glutathione S-transferase AN1595, the oxidoreductases AN1596 and AN1597 probably function as decorative enzymes. It is possible that in biological conditions the compound is oxidized to ent-pimara-8(14),15-dien-19-oic acid, which is a bioactive diterpene compound predominant in many plant extracts. The polypeptide is 3-hydroxy-3-methylglutaryl coenzyme A reductase AN1593 (Emericella nidulans (strain FGSC A4 / ATCC 38163 / CBS 112.46 / NRRL 194 / M139) (Aspergillus nidulans)).